The primary structure comprises 416 residues: Chaperone protein dnaJ A6 (416 aa).

The J domain occupies 12 to 73; that stretch reads KYYEVLGVPK…EKRDIYDQYG (62 aa). A CR-type zinc finger spans residues 133–217; it reads GSMKKLSLSR…CRASKVIQEK (85 aa). 8 residues coordinate Zn(2+): Cys-146, Cys-149, Cys-162, Cys-165, Cys-189, Cys-192, Cys-205, and Cys-208. CXXCXGXG motif repeat units lie at residues 146–153, 162–169, and 189–196; these read CPKCKGKG, CYGCHGVG, and CPECRGSG. The segment covering 380 to 399 has biased composition (basic and acidic residues); sequence HDVNIEEEMRRKQYQRKQEA. Residues 380 to 416 are disordered; it reads HDVNIEEEMRRKQYQRKQEAYDEDEEEDAPRVQCAQQ.

This sequence belongs to the DnaJ family. Interacts with ZFP1.

It localises to the nucleus. Its subcellular location is the cytoplasm. In terms of biological role, involved in disease resistance. Acts as a negative regulator of innate immunity to the rice blast fungus (Magnaporthe oryzae). Acts as a negative regulator of the pathogen-associated molecular pattern (PAMP)-triggered immunity (PTI) response through the inhibition of reactive oxygen species (ROS) accumulation and expression of defense-related genes. May function via the ubiquitin-proteasome degradation pathway. The polypeptide is Chaperone protein dnaJ A6 (Oryza sativa subsp. japonica (Rice)).